The primary structure comprises 284 residues: tRNA pseudouridine synthase A (284 aa).

Aspartate 52 acts as the Nucleophile in catalysis. Tyrosine 149 is a binding site for substrate.

Belongs to the tRNA pseudouridine synthase TruA family. As to quaternary structure, homodimer.

The catalysed reaction is uridine(38/39/40) in tRNA = pseudouridine(38/39/40) in tRNA. In terms of biological role, formation of pseudouridine at positions 38, 39 and 40 in the anticodon stem and loop of transfer RNAs. The protein is tRNA pseudouridine synthase A of Orientia tsutsugamushi (strain Boryong) (Rickettsia tsutsugamushi).